Here is a 372-residue protein sequence, read N- to C-terminus: MASSQLDRQRSRSAKMNRALTAAEWWRLGLMFAVIVALHLVGWLTVTLLVEPARLSLGGKAFGIGVGLTAYTLGLRHAFDADHIAAIDNTTRKLMSDGHRPLAVGFFFSLGHSTVVFGLAVMLVTGLKAIVGPVENDSSTLHHYTGLIGTSISGAFLYLIGILNVIVLVGIVRVFAHLRRGDYDEAELEQQLDNRGLLIRFLGRFTKSLTKSWHMYPVGFLFGLGFDTATEIALLVLAGTSAAAGLPWYAILCLPVLFAAGMCLLDTIDGSFMNFAYGWAFSSPVRKIYYNITVTGLSVAVALLIGSVELLGLIANQLGWQGPFWDWLGGLDLNTVGFVVVAMFALTWAIALLVWHYGRVEERWTPAPDRTT.

The next 8 membrane-spanning stretches (helical) occupy residues Leu30 to Val50, Leu55 to Leu75, Val104 to Val124, Ile152 to Val172, Val218 to Ala238, Gly245 to Leu265, Val294 to Ile314, and Thr335 to Trp355.

The protein belongs to the NiCoT transporter (TC 2.A.52) family.

It is found in the cell membrane. It catalyses the reaction Ni(2+)(in) = Ni(2+)(out). Export of the fluoroquinolone antibiotic norfloxacin is inhibited by the proton ionophore carbonyl cyanide m-chlorophenylhydrazone (CCCP). Nickel may influence the extrusion of antibiotics possibly by facilitating the proton motive force-dependent efflux process. Functionally, involved in nickel uptake. In addition, acts as a drug efflux pump and contributes to moderate tolerance towards different classes of antibiotics, including fluoroquinolones, aminoglycosides and the anti-TB drug isoniazid, with a preference for fluoroquinolones. The drug efflux function is probably dependent on proton motive force (pmf) or ion gradient, and might be facilitated by the presence of Ni(2+) ions. This Mycobacterium tuberculosis (strain ATCC 25618 / H37Rv) protein is Nickel transporter NicT.